A 768-amino-acid polypeptide reads, in one-letter code: Eukaryotic elongation factor 2 kinase (768 aa).

A compositionally biased stretch (polar residues) spans 1 to 17; sequence MTIDTTNESDNSPTNSP. Positions 1-21 are disordered; it reads MTIDTTNESDNSPTNSPGLEA. The Alpha-type protein kinase domain maps to 102–309; it reads RYSAIRKQWT…ICETMDLSNF (208 aa). 279 to 284 is a binding site for ATP; the sequence is GDGNLG. Over residues 402–411 the composition is skewed to acidic residues; that stretch reads SEDEEDEEED. Positions 402–446 are disordered; that stretch reads SEDEEDEEEDYPRSEKSGNSQKSRRSRMSISTRSSGDESASRPRK.

This sequence belongs to the protein kinase superfamily. Alpha-type protein kinase family. In terms of assembly, monomer or homodimer. Interacts with cmd-1 in the presence of Ca(2+).

The enzyme catalyses [translation elongation factor 2] + ATP = [translation elongation factor 2]-phosphate + ADP + H(+). With respect to regulation, calcium(2+)/calmodulin dependent activity. Undergoes calcium/calmodulin-dependent intramolecular autophosphorylation, and this results in it becoming partially calcium/calmodulin-independent. Functionally, phosphorylates elongation factor-2 (eEF-2) at two threonine residues that are conserved in all eukaryotes and are located within a GTP-binding domain. Calcium(2+)/calmodulin dependent activity. Inactivates eEF-2 by catalyzing its phosphorylation. eEF-2 catalyzes the movement of the ribosome along mRNA during translation in eukaryotic cells. The chain is Eukaryotic elongation factor 2 kinase (efk-1) from Caenorhabditis elegans.